The following is a 330-amino-acid chain: Elongation factor Ts (330 aa).

The segment at 79-82 (TDFV) is involved in Mg(2+) ion dislocation from EF-Tu.

Belongs to the EF-Ts family.

It is found in the cytoplasm. Its function is as follows. Associates with the EF-Tu.GDP complex and induces the exchange of GDP to GTP. It remains bound to the aminoacyl-tRNA.EF-Tu.GTP complex up to the GTP hydrolysis stage on the ribosome. This is Elongation factor Ts from Bacteroides thetaiotaomicron (strain ATCC 29148 / DSM 2079 / JCM 5827 / CCUG 10774 / NCTC 10582 / VPI-5482 / E50).